The sequence spans 322 residues: CXXC-type zinc finger protein 5 (322 aa).

Positions 1 to 10 are enriched in gly residues; sequence MSSLGGGSQD. A disordered region spans residues 1–100; it reads MSSLGGGSQD…SGGGSMMGGE (100 aa). Composition is skewed to low complexity over residues 11-20 and 28-52; these read AGGSSSSSTN and SGPK…VADD. Position 53 is a phosphothreonine (T53). A compositionally biased stretch (gly residues) spans 87–97; it reads SSGGSGGGSMM. The CXXC-type zinc-finger motif lies at 256–297; it reads GKKKRKRCGMCAPCRRRINCEQCSSCRNRKTGHQICKFRKCE. The Nuclear localization signal signature appears at 257–262; it reads KKKRKR. Residues C263, C266, C269, C275, C278, C281, C291, and C296 each contribute to the Zn(2+) site.

Interacts with DVL1. Interacts with RBPJ.

The protein resides in the nucleus. The protein localises to the cytoplasm. Functionally, may indirectly participate in activation of the NF-kappa-B and MAPK pathways. Acts as a mediator of BMP4-mediated modulation of canonical Wnt signaling activity in neural stem cells. Required for DNA damage-induced ATM phosphorylation, p53 activation and cell cycle arrest. Involved in myelopoiesis. Transcription factor. Binds to the oxygen responsive element of COX4I2 and represses its transcription under hypoxia conditions (4% oxygen), as well as normoxia conditions (20% oxygen). May repress COX4I2 transactivation induced by CHCHD2 and RBPJ. Binds preferentially to DNA containing cytidine-phosphate-guanosine (CpG) dinucleotides over CpH (H=A, T, and C), hemimethylated-CpG and hemimethylated-hydroxymethyl-CpG. The chain is CXXC-type zinc finger protein 5 (CXXC5) from Homo sapiens (Human).